Consider the following 121-residue polypeptide: Small ribosomal subunit protein uS13 (121 aa).

Positions 97-121 (VRGQRTRTNARTRRGARKTVAGRKK) are disordered. Over residues 100-121 (QRTRTNARTRRGARKTVAGRKK) the composition is skewed to basic residues.

The protein belongs to the universal ribosomal protein uS13 family. In terms of assembly, part of the 30S ribosomal subunit. Forms a loose heterodimer with protein S19. Forms two bridges to the 50S subunit in the 70S ribosome.

Located at the top of the head of the 30S subunit, it contacts several helices of the 16S rRNA. In the 70S ribosome it contacts the 23S rRNA (bridge B1a) and protein L5 of the 50S subunit (bridge B1b), connecting the 2 subunits; these bridges are implicated in subunit movement. Contacts the tRNAs in the A and P-sites. This is Small ribosomal subunit protein uS13 from Prochlorococcus marinus (strain NATL2A).